Here is a 196-residue protein sequence, read N- to C-terminus: Holliday junction branch migration complex subunit RuvA (196 aa).

The interval 1-63 (MINKIYGKII…EDEIKLFGFL (63 aa)) is domain I. The segment at 64-138 (NVSEREVFEE…GKLVKADELT (75 aa)) is domain II. Thr-138 is a region of interest (flexible linker). The segment at 139-196 (SSVFKFKDLEQSIVNMGFDRKLVVAAIKEIMLIDEFLMLREVEQEQFLFRETLKRLSG) is domain III.

This sequence belongs to the RuvA family. As to quaternary structure, homotetramer. Forms an RuvA(8)-RuvB(12)-Holliday junction (HJ) complex. HJ DNA is sandwiched between 2 RuvA tetramers; dsDNA enters through RuvA and exits via RuvB. An RuvB hexamer assembles on each DNA strand where it exits the tetramer. Each RuvB hexamer is contacted by two RuvA subunits (via domain III) on 2 adjacent RuvB subunits; this complex drives branch migration. In the full resolvosome a probable DNA-RuvA(4)-RuvB(12)-RuvC(2) complex forms which resolves the HJ.

The protein localises to the cytoplasm. The RuvA-RuvB-RuvC complex processes Holliday junction (HJ) DNA during genetic recombination and DNA repair, while the RuvA-RuvB complex plays an important role in the rescue of blocked DNA replication forks via replication fork reversal (RFR). RuvA specifically binds to HJ cruciform DNA, conferring on it an open structure. The RuvB hexamer acts as an ATP-dependent pump, pulling dsDNA into and through the RuvAB complex. HJ branch migration allows RuvC to scan DNA until it finds its consensus sequence, where it cleaves and resolves the cruciform DNA. This chain is Holliday junction branch migration complex subunit RuvA, found in Borrelia hermsii (strain HS1 / DAH).